A 91-amino-acid chain; its full sequence is MKTLLLTLVVMTIVCLDLGYTLICFISSHDSVTCAPGENVCFLKSWCDAWCGSRGKKLSFGCAATCPKVNPGIDIECCSTDNCNPHPKLRP.

Residues 1-21 form the signal peptide; that stretch reads MKTLLLTLVVMTIVCLDLGYT. 5 cysteine pairs are disulfide-bonded: Cys-24–Cys-41, Cys-34–Cys-62, Cys-47–Cys-51, Cys-66–Cys-77, and Cys-78–Cys-83.

Belongs to the three-finger toxin family. Long-chain subfamily. Type II alpha-neurotoxin sub-subfamily. Monomer. In terms of tissue distribution, expressed by the venom gland.

It is found in the secreted. In terms of biological role, binds with high affinity to muscular (alpha-1/CHRNA1) and neuronal (alpha-7/CHRNA7) nicotinic acetylcholine receptor (nAChR) and inhibits acetylcholine from binding to the receptor, thereby impairing neuromuscular and neuronal transmission. Recombinant LNTX1 leads to a functional block of the muscle-type acetylcholine receptors. Has a cytotoxic activity. This neurotoxin is lethal. The sequence is that of Alpha-elapitoxin-Oh2b from Ophiophagus hannah (King cobra).